A 300-amino-acid polypeptide reads, in one-letter code: Cation-efflux pump FieF (300 aa).

The next 4 helical transmembrane spans lie at 12–32 (AALA…VAWY), 40–60 (LAAL…LLVV), 82–102 (AALA…LTGF), and 114–134 (PGVG…LVTY). Residues D45 and D49 each contribute to the Zn(2+) site. Zn(2+) contacts are provided by H153 and D157. The next 2 membrane-spanning stretches (helical) occupy residues 155–175 (QSDV…WYGF) and 178–198 (ADAL…LRMG).

The protein belongs to the cation diffusion facilitator (CDF) transporter (TC 2.A.4) family. FieF subfamily. In terms of assembly, homodimer.

It localises to the cell inner membrane. The enzyme catalyses Zn(2+)(in) + H(+)(out) = Zn(2+)(out) + H(+)(in). It catalyses the reaction Cd(2+)(in) + H(+)(out) = Cd(2+)(out) + H(+)(in). The catalysed reaction is Fe(2+)(in) + H(+)(out) = Fe(2+)(out) + H(+)(in). Its function is as follows. Divalent metal cation transporter which exports Zn(2+), Cd(2+) and possibly Fe(2+). May be involved in zinc and iron detoxification by efflux. The polypeptide is Cation-efflux pump FieF (Serratia proteamaculans (strain 568)).